Here is a 303-residue protein sequence, read N- to C-terminus: Sterol-4-alpha-carboxylate 3-dehydrogenase ERG26, decarboxylating (303 aa).

Residues 8–9 (SL) and 30–32 (TAS) each bind NADP(+). S71 is a binding site for substrate. The interval 77–96 (PTQEPTSEENAHRYDENNAP) is disordered. NADP(+) contacts are provided by residues Y102, K106, and 128–131 (IPGI). Y102 is a substrate binding site. Catalysis depends on K106, which acts as the Proton donor.

Belongs to the 3-beta-HSD family. In terms of assembly, heterotetramer of ERG25, ERG26, ERG27 and ERG28. ERG28 acts as a scaffold to tether ERG27 and other 4,4-demethylation-related enzymes, forming a demethylation enzyme complex, in the endoplasmic reticulum.

It is found in the endoplasmic reticulum membrane. It functions in the pathway steroid metabolism; ergosterol biosynthesis. In terms of biological role, sterol-4-alpha-carboxylate 3-dehydrogenase; part of the third module of ergosterol biosynthesis pathway that includes the late steps of the pathway. ERG26 is a catalytic component of the C-4 demethylation complex that catalyzes the conversion of 4,4-dimethylfecosterol into fecosterol via 4-methylfecosterol. The third module or late pathway involves the ergosterol synthesis itself through consecutive reactions that mainly occur in the endoplasmic reticulum (ER) membrane. Firstly, the squalene synthase ERG9 catalyzes the condensation of 2 farnesyl pyrophosphate moieties to form squalene, which is the precursor of all steroids. Squalene synthase is crucial for balancing the incorporation of farnesyl diphosphate (FPP) into sterol and nonsterol isoprene synthesis. Secondly, squalene is converted into lanosterol by the consecutive action of the squalene epoxidase ERG1 and the lanosterol synthase ERG7. Then, the delta(24)-sterol C-methyltransferase ERG6 methylates lanosterol at C-24 to produce eburicol. Eburicol is the substrate of the sterol 14-alpha demethylase encoded by CYP51A, CYP51B and CYP51C, to yield 4,4,24-trimethyl ergosta-8,14,24(28)-trienol. CYP51B encodes the enzyme primarily responsible for sterol 14-alpha-demethylation, and plays an essential role in ascospore formation. CYP51A encodes an additional sterol 14-alpha-demethylase, induced on ergosterol depletion and responsible for the intrinsic variation in azole sensitivity. The third CYP51 isoform, CYP51C, does not encode a sterol 14-alpha-demethylase, but is required for full virulence on host wheat ears. The C-14 reductase ERG24 then reduces the C14=C15 double bond which leads to 4,4-dimethylfecosterol. A sequence of further demethylations at C-4, involving the C-4 demethylation complex containing the C-4 methylsterol oxidases ERG25, the sterol-4-alpha-carboxylate 3-dehydrogenase ERG26 and the 3-keto-steroid reductase ERG27, leads to the production of fecosterol via 4-methylfecosterol. ERG28 has a role as a scaffold to help anchor ERG25, ERG26 and ERG27 to the endoplasmic reticulum. The C-8 sterol isomerase ERG2 then catalyzes the reaction which results in unsaturation at C-7 in the B ring of sterols and thus converts fecosterol to episterol. The sterol-C5-desaturases ERG3A and ERG3BB then catalyze the introduction of a C-5 double bond in the B ring to produce 5-dehydroepisterol. The C-22 sterol desaturases ERG5A and ERG5B further convert 5-dehydroepisterol into ergosta-5,7,22,24(28)-tetraen-3beta-ol by forming the C-22(23) double bond in the sterol side chain. Finally, ergosta-5,7,22,24(28)-tetraen-3beta-ol is substrate of the C-24(28) sterol reductase ERG4 to produce ergosterol. This Gibberella zeae (strain ATCC MYA-4620 / CBS 123657 / FGSC 9075 / NRRL 31084 / PH-1) (Wheat head blight fungus) protein is Sterol-4-alpha-carboxylate 3-dehydrogenase ERG26, decarboxylating.